A 221-amino-acid chain; its full sequence is Deoxyribose-phosphate aldolase (221 aa).

Aspartate 91 serves as the catalytic Proton donor/acceptor. Lysine 153 (schiff-base intermediate with acetaldehyde) is an active-site residue. The active-site Proton donor/acceptor is the lysine 182.

It belongs to the DeoC/FbaB aldolase family. DeoC type 1 subfamily.

It is found in the cytoplasm. It carries out the reaction 2-deoxy-D-ribose 5-phosphate = D-glyceraldehyde 3-phosphate + acetaldehyde. It participates in carbohydrate degradation; 2-deoxy-D-ribose 1-phosphate degradation; D-glyceraldehyde 3-phosphate and acetaldehyde from 2-deoxy-alpha-D-ribose 1-phosphate: step 2/2. Functionally, catalyzes a reversible aldol reaction between acetaldehyde and D-glyceraldehyde 3-phosphate to generate 2-deoxy-D-ribose 5-phosphate. This chain is Deoxyribose-phosphate aldolase, found in Clostridium botulinum (strain Alaska E43 / Type E3).